The chain runs to 300 residues: Transcription initiation factor IIB (300 aa).

The TFIIB-type zinc finger occupies 2 to 34 (NKQKVCPACESAELIYDPERGEIVCAKCGYVIE). Residues cysteine 7, cysteine 10, cysteine 26, and cysteine 29 each coordinate Zn(2+). Repeat copies occupy residues 114–197 (SELD…ARNL) and 210–291 (DYVN…ELVE).

The protein belongs to the TFIIB family.

In terms of biological role, stabilizes TBP binding to an archaeal box-A promoter. Also responsible for recruiting RNA polymerase II to the pre-initiation complex (DNA-TBP-TFIIB). In Pyrococcus furiosus (strain ATCC 43587 / DSM 3638 / JCM 8422 / Vc1), this protein is Transcription initiation factor IIB.